The sequence spans 293 residues: Ribosomal protein L11 methyltransferase (293 aa).

4 residues coordinate S-adenosyl-L-methionine: T145, G166, D188, and N230.

This sequence belongs to the methyltransferase superfamily. PrmA family.

It localises to the cytoplasm. The catalysed reaction is L-lysyl-[protein] + 3 S-adenosyl-L-methionine = N(6),N(6),N(6)-trimethyl-L-lysyl-[protein] + 3 S-adenosyl-L-homocysteine + 3 H(+). Functionally, methylates ribosomal protein L11. In Escherichia coli (strain 55989 / EAEC), this protein is Ribosomal protein L11 methyltransferase.